The sequence spans 249 residues: 5'-nucleotidase SurE (249 aa).

A divalent metal cation-binding residues include D8, D9, S39, and N91.

This sequence belongs to the SurE nucleotidase family. It depends on a divalent metal cation as a cofactor.

The protein resides in the cytoplasm. The catalysed reaction is a ribonucleoside 5'-phosphate + H2O = a ribonucleoside + phosphate. In terms of biological role, nucleotidase that shows phosphatase activity on nucleoside 5'-monophosphates. The protein is 5'-nucleotidase SurE of Ectopseudomonas mendocina (strain ymp) (Pseudomonas mendocina).